The following is a 273-amino-acid chain: 4-hydroxy-tetrahydrodipicolinate reductase (273 aa).

Residues 11–16 (GATGKM) and 106–108 (GTT) contribute to the NAD(+) site. The active-site Proton donor/acceptor is His-162. His-163 lines the (S)-2,3,4,5-tetrahydrodipicolinate pocket. Residue Lys-166 is the Proton donor of the active site. Residue 172 to 173 (GT) participates in (S)-2,3,4,5-tetrahydrodipicolinate binding.

It belongs to the DapB family.

It is found in the cytoplasm. It catalyses the reaction (S)-2,3,4,5-tetrahydrodipicolinate + NAD(+) + H2O = (2S,4S)-4-hydroxy-2,3,4,5-tetrahydrodipicolinate + NADH + H(+). The catalysed reaction is (S)-2,3,4,5-tetrahydrodipicolinate + NADP(+) + H2O = (2S,4S)-4-hydroxy-2,3,4,5-tetrahydrodipicolinate + NADPH + H(+). It participates in amino-acid biosynthesis; L-lysine biosynthesis via DAP pathway; (S)-tetrahydrodipicolinate from L-aspartate: step 4/4. Its function is as follows. Catalyzes the conversion of 4-hydroxy-tetrahydrodipicolinate (HTPA) to tetrahydrodipicolinate. The protein is 4-hydroxy-tetrahydrodipicolinate reductase of Synechococcus elongatus (strain ATCC 33912 / PCC 7942 / FACHB-805) (Anacystis nidulans R2).